The primary structure comprises 362 residues: S-adenosylmethionine:tRNA ribosyltransferase-isomerase (362 aa).

Belongs to the QueA family. As to quaternary structure, monomer.

The protein resides in the cytoplasm. The enzyme catalyses 7-aminomethyl-7-carbaguanosine(34) in tRNA + S-adenosyl-L-methionine = epoxyqueuosine(34) in tRNA + adenine + L-methionine + 2 H(+). It participates in tRNA modification; tRNA-queuosine biosynthesis. Functionally, transfers and isomerizes the ribose moiety from AdoMet to the 7-aminomethyl group of 7-deazaguanine (preQ1-tRNA) to give epoxyqueuosine (oQ-tRNA). The chain is S-adenosylmethionine:tRNA ribosyltransferase-isomerase from Methylobacterium sp. (strain 4-46).